The chain runs to 566 residues: MKFSKFYAPTTKEAPKDASLPSHQFLIRGGFVEQIGSGLYNYLPLGKIMHDKISRVVKEEMNEAGALEVSFSVVTSGELWKQSGRYNVFGKELLRFKDRKDNDFVISPTNEEAAVALVRGKVTSYKQLPLNLYQINTKFRDEARPRFGLLRGREFTMKDGYSFHSSKEDLKREFDLMEATYSKIFTRLGLNFRAVEADSGAIGGSGSKEFMVLASNGEDDILCCEACRYAANVEAARRKPRVSEAEAPEADAAKFLTPNAKTIKDVAEFFKVSEFYCIKAVMKKAIYEDKEEVVVFFVRGDDELQETKAQNACKALELVDASEADVAKAGLVAGFCGPVGLKDVKFFIDNELRGANNMICGANEKDYHFVGVSVSGFNEERFKDLVKVKEGDKCPVCGGNLKLSKGIEVGHIFQLGDKYSAAMNATYLDENGKVKPFLMGCYGIGISRLIAVMIEASHDEKGCIWKKECAPFDVEIIISNLKDEAGVKFAFELYESLKKAGVSVIIDDRNERFGVKMNDFELIGFPYALLVGKEFANGKVEFITRDGLSKETIEANDAFRKIKESL.

This sequence belongs to the class-II aminoacyl-tRNA synthetase family. ProS type 1 subfamily. Homodimer.

It localises to the cytoplasm. The enzyme catalyses tRNA(Pro) + L-proline + ATP = L-prolyl-tRNA(Pro) + AMP + diphosphate. In terms of biological role, catalyzes the attachment of proline to tRNA(Pro) in a two-step reaction: proline is first activated by ATP to form Pro-AMP and then transferred to the acceptor end of tRNA(Pro). As ProRS can inadvertently accommodate and process non-cognate amino acids such as alanine and cysteine, to avoid such errors it has two additional distinct editing activities against alanine. One activity is designated as 'pretransfer' editing and involves the tRNA(Pro)-independent hydrolysis of activated Ala-AMP. The other activity is designated 'posttransfer' editing and involves deacylation of mischarged Ala-tRNA(Pro). The misacylated Cys-tRNA(Pro) is not edited by ProRS. This chain is Proline--tRNA ligase, found in Campylobacter concisus (strain 13826).